The primary structure comprises 563 residues: Arginine--tRNA ligase (563 aa).

The short motif at 121-131 (PNIAKPMSMGH) is the 'HIGH' region element.

This sequence belongs to the class-I aminoacyl-tRNA synthetase family. In terms of assembly, monomer.

The protein localises to the cytoplasm. The enzyme catalyses tRNA(Arg) + L-arginine + ATP = L-arginyl-tRNA(Arg) + AMP + diphosphate. The chain is Arginine--tRNA ligase from Leuconostoc mesenteroides subsp. mesenteroides (strain ATCC 8293 / DSM 20343 / BCRC 11652 / CCM 1803 / JCM 6124 / NCDO 523 / NBRC 100496 / NCIMB 8023 / NCTC 12954 / NRRL B-1118 / 37Y).